Reading from the N-terminus, the 396-residue chain is MAKLNAYFGEYGGQYVPQILVPALEQLEQAFIDAQEDPEFRSEFMTLLQEYAGRPTALTLTRNLTKGTKTKLYLKREDLLHGGAHKTNQVLGQALLAKRMGKNEIIAETGAGQHGVATALACALLGLKCRVYMGAKDVERQSPNVFRMKLMGAEVIPVHSGSATLKDACNEALRDWSATYEDAHYLLGTAAGPHPFPTIVRDFQRMIGEETKNQILAREGRLPDAVIACVGGGSNAIGMFADFIEEESVRLIGVEPAGKGIDTDQHGAPLKHGKTGIFFGMKAPLMQDPNGQVEESYSVSAGLDFPSVGPQHAHLNAIGRAEYDNVTDDEALEAFQEIARHEGIIPALESSHAVAHALRMARENPEKEQLLVVNLSGRGDKDIFTVHAILEEKGAI.

Position 86 is an N6-(pyridoxal phosphate)lysine (lysine 86).

The protein belongs to the TrpB family. In terms of assembly, tetramer of two alpha and two beta chains. The cofactor is pyridoxal 5'-phosphate.

The catalysed reaction is (1S,2R)-1-C-(indol-3-yl)glycerol 3-phosphate + L-serine = D-glyceraldehyde 3-phosphate + L-tryptophan + H2O. Its pathway is amino-acid biosynthesis; L-tryptophan biosynthesis; L-tryptophan from chorismate: step 5/5. In terms of biological role, the beta subunit is responsible for the synthesis of L-tryptophan from indole and L-serine. In Vibrio campbellii (strain ATCC BAA-1116), this protein is Tryptophan synthase beta chain.